We begin with the raw amino-acid sequence, 514 residues long: MEISQRVKARLAVLTAHLAVSDTVGLEQVLPAIAPWCTSAHITAAPHGSLKGNLTIVDERTGKKYQVPVSEHGTVKAVDLKKITTGKDDKGLKLYDPGYLNTAPVRSSICYIDGDEGILRYRGYPIEELAESSTFIEVAYLLMYGNLPSQSQLADWEFTVSQHSAVPQGVLDIIQSMPHDAHPMGVLVSAMSALSIFHPDANPALSGQDIYKSKQVRDKQIVRILGKAPTIAAAAYLRTAGRPPVLPSANLSYSENFLYMLDSMGNRSYKPNPRLARVLDILFILHAEHEMNCSTAAARHLASSGVDVYTACAGAVGALYGPLHGGANEAVLKMLAEIGTAENIPDFIEGVKNRKRKMSGFGHRVYKNYDPRAKVIKKLADEVFSIVGRDPLIEVAVALEKAALSDEYFVKRKLYPNVDFYSGLIYRAMGFPPEFFTVLFAVPRMAGYLSHWRESLDDPDTRIMRPQQAYTGVWMRHYEPVRERTLSSDSDKDKFGQVSISNASRRRLAGSSAL.

Active-site residues include His324, His363, and Asp419.

The protein belongs to the citrate synthase family. In terms of tissue distribution, widely expressed. Expressed throughout the shoot. Expressed in flower, silique, stem, cauline leaf, young leaf, mature leaf and senescent leaf.

The protein resides in the peroxisome. The catalysed reaction is oxaloacetate + acetyl-CoA + H2O = citrate + CoA + H(+). It participates in carbohydrate metabolism; tricarboxylic acid cycle; isocitrate from oxaloacetate: step 1/2. In terms of biological role, peroxisomal citrate synthase required for the fatty acid respiration in seedlings, citrate being exported from peroxisomes into mitochondria during respiration of triacylglycerol (TAG). Indeed, complete respiration requires the transfer of carbon in the form of citrate from the peroxisome to the mitochondria. The protein is Citrate synthase 2, peroxisomal (CSY2) of Arabidopsis thaliana (Mouse-ear cress).